Here is a 124-residue protein sequence, read N- to C-terminus: Ribonuclease pancreatic (124 aa).

Substrate contacts are provided by Lys7 and Arg10. The Proton acceptor role is filled by His12. Intrachain disulfides connect Cys26-Cys84, Cys40-Cys95, Cys58-Cys110, and Cys65-Cys72. A glycan (N-linked (GlcNAc...) asparagine) is linked at Asn34. Residues 41–45 (KPVNT), Lys66, and Arg85 each bind substrate. The active-site Proton donor is the His119.

This sequence belongs to the pancreatic ribonuclease family. As to quaternary structure, monomer. Interacts with and forms tight 1:1 complexes with RNH1. Dimerization of two such complexes may occur. Interaction with RNH1 inhibits this protein. As to expression, pancreas.

It localises to the secreted. It carries out the reaction an [RNA] containing cytidine + H2O = an [RNA]-3'-cytidine-3'-phosphate + a 5'-hydroxy-ribonucleotide-3'-[RNA].. The catalysed reaction is an [RNA] containing uridine + H2O = an [RNA]-3'-uridine-3'-phosphate + a 5'-hydroxy-ribonucleotide-3'-[RNA].. Its function is as follows. Endonuclease that catalyzes the cleavage of RNA on the 3' side of pyrimidine nucleotides. Acts on single-stranded and double-stranded RNA. This chain is Ribonuclease pancreatic (RNASE1), found in Mesocricetus auratus (Golden hamster).